The following is a 389-amino-acid chain: Probable DNA double-strand break repair nuclease NurA (389 aa).

Mn(2+)-binding residues include Asp-74 and Asp-151.

It belongs to the NurA family. The cofactor is Mn(2+).

Functionally, involved in DNA double-strand break (DSB) repair. Probably acts with HerA to stimulate resection of the 5' strand and produce the long 3' single-strand that is required for RadA loading. The protein is Probable DNA double-strand break repair nuclease NurA of Methanocaldococcus jannaschii (strain ATCC 43067 / DSM 2661 / JAL-1 / JCM 10045 / NBRC 100440) (Methanococcus jannaschii).